We begin with the raw amino-acid sequence, 225 residues long: Insulin-induced gene 2 protein (225 aa).

Topologically, residues 1-28 (MAENDAKPTLPKKSGPYISSVTSHGMNL) are cytoplasmic. A helical membrane pass occupies residues 29-51 (VIRGIVLFFIGVFLALVLNLLQI). The Lumenal segment spans residues 52–70 (QRNVTLFPPDVITSIFSSA). A helical membrane pass occupies residues 71 to 88 (WWVPPCCGTASAVIGLLY). Topologically, residues 89 to 103 (PCMDRHLGEPHKFKR) are cytoplasmic. Residues 104–126 (EWSSVMRCVAVFVGINHASAKVD) form a helical membrane-spanning segment. Topologically, residues 127–129 (FAN) are lumenal. A helical transmembrane segment spans residues 130–148 (NIQLSLTLAALSIGLWWTF). Over 149 to 153 (DRSRS) the chain is Cytoplasmic. The helical transmembrane segment at 154–175 (GFGLGVGIAFLATLVSQLLVYN) threads the bilayer. Topologically, residues 176 to 189 (GVYQYTSPDFLYVR) are lumenal. Residues 190-207 (SWLPCIFFAGGITMGNIG) traverse the membrane as a helical segment. Residues 208–225 (RQLAMYECKVIAEKSHED) lie on the Cytoplasmic side of the membrane. Positions 219-225 (AEKSHED) match the KxHxx motif.

This sequence belongs to the INSIG family. Interacts with SCAP; interaction is direct and only takes place in the presence of sterols; it prevents interaction between SCAP and the coat protein complex II (COPII). Associates with the SCAP-SREBP complex; association is mediated via its interaction with SCAP and only takes place in the presence of sterols.

The protein localises to the endoplasmic reticulum membrane. Its function is as follows. Oxysterol-binding protein that mediates feedback control of cholesterol synthesis by controlling both endoplasmic reticulum to Golgi transport of SCAP and degradation of HMGCR. Acts as a negative regulator of cholesterol biosynthesis by mediating the retention of the SCAP-SREBP complex in the endoplasmic reticulum, thereby blocking the processing of sterol regulatory element-binding proteins (SREBPs). Binds oxysterol, including 22-hydroxycholesterol, 24-hydroxycholesterol, 25-hydroxycholesterol and 27-hydroxycholesterol, regulating interaction with SCAP and retention of the SCAP-SREBP complex in the endoplasmic reticulum. In presence of oxysterol, interacts with SCAP, retaining the SCAP-SREBP complex in the endoplasmic reticulum, thereby preventing SCAP from escorting SREBPs to the Golgi. Sterol deprivation reduces oxysterol-binding, disrupting the interaction between INSIG2 and SCAP, thereby promoting Golgi transport of the SCAP-SREBP complex, followed by processing and nuclear translocation of SREBPs. Also regulates cholesterol synthesis by regulating degradation of HMGCR. The protein is Insulin-induced gene 2 protein of Gallus gallus (Chicken).